A 266-amino-acid polypeptide reads, in one-letter code: OCIA domain-containing protein 1 (266 aa).

The 114-residue stretch at 1–114 (MSQASSGFTP…MKLENSPLGE (114 aa)) folds into the OCIA domain. 2 disordered regions span residues 127–213 (EMNQ…DVPK) and 225–266 (KNRE…SWEE). Residues 135–155 (PNSSESQQPGSESVQQPATEV) show a composition bias toward polar residues. Positions 156 to 178 (SSATESYSSYTSDYTYSTPSQSY) are enriched in low complexity. Residues 179 to 188 (ETTPFSSGFS) show a composition bias toward polar residues. The segment covering 250–266 (QPKKEAKKNKYGDSWEE) has biased composition (basic and acidic residues).

Belongs to the OCIAD1 family.

It is found in the endosome. The polypeptide is OCIA domain-containing protein 1 (ociad1) (Danio rerio (Zebrafish)).